The chain runs to 642 residues: Threonine--tRNA ligase (642 aa).

In terms of domain architecture, TGS spans 1–61 (MPVITLPDGS…DTDSELSIIT (61 aa)). A catalytic region spans residues 243–534 (DHRKIGKQLD…LIEEYAGKFP (292 aa)). 3 residues coordinate Zn(2+): C334, H385, and H511.

It belongs to the class-II aminoacyl-tRNA synthetase family. As to quaternary structure, homodimer. Zn(2+) serves as cofactor.

The protein resides in the cytoplasm. The enzyme catalyses tRNA(Thr) + L-threonine + ATP = L-threonyl-tRNA(Thr) + AMP + diphosphate + H(+). Catalyzes the attachment of threonine to tRNA(Thr) in a two-step reaction: L-threonine is first activated by ATP to form Thr-AMP and then transferred to the acceptor end of tRNA(Thr). Also edits incorrectly charged L-seryl-tRNA(Thr). This Shewanella woodyi (strain ATCC 51908 / MS32) protein is Threonine--tRNA ligase.